Reading from the N-terminus, the 200-residue chain is General odorant-binding protein 70 (200 aa).

An N-terminal signal peptide occupies residues 1 to 29; sequence MRRQYSMWASTVAVIACGSALMLLHPVGA. 2 cysteine pairs are disulfide-bonded: Cys105-Cys174 and Cys152-Cys183.

It belongs to the PBP/GOBP family.

It localises to the secreted. Its function is as follows. Present in the aqueous fluid surrounding olfactory sensory dendrites and are thought to aid in the capture and transport of hydrophobic odorants into and through this fluid. The protein is General odorant-binding protein 70 (Obp70) of Anopheles gambiae (African malaria mosquito).